The primary structure comprises 425 residues: Glutamyl-tRNA reductase (425 aa).

Substrate-binding positions include 49 to 52 (TCNR), Ser-106, 111 to 113 (EPQ), and Gln-117. Cys-50 (nucleophile) is an active-site residue. An NADP(+)-binding site is contributed by 186–191 (GAGETI).

Belongs to the glutamyl-tRNA reductase family. In terms of assembly, homodimer.

It catalyses the reaction (S)-4-amino-5-oxopentanoate + tRNA(Glu) + NADP(+) = L-glutamyl-tRNA(Glu) + NADPH + H(+). Its pathway is porphyrin-containing compound metabolism; protoporphyrin-IX biosynthesis; 5-aminolevulinate from L-glutamyl-tRNA(Glu): step 1/2. Functionally, catalyzes the NADPH-dependent reduction of glutamyl-tRNA(Glu) to glutamate 1-semialdehyde (GSA). This Saccharophagus degradans (strain 2-40 / ATCC 43961 / DSM 17024) protein is Glutamyl-tRNA reductase.